A 42-amino-acid polypeptide reads, in one-letter code: Photosystem I reaction center subunit IX (42 aa).

A helical transmembrane segment spans residues 7 to 27; sequence YLSVAPVLSTLWFGALAGLLI.

This sequence belongs to the PsaJ family.

It localises to the plastid. The protein localises to the chloroplast thylakoid membrane. In terms of biological role, may help in the organization of the PsaE and PsaF subunits. This is Photosystem I reaction center subunit IX from Guizotia abyssinica (Niger).